Here is a 525-residue protein sequence, read N- to C-terminus: Glutamate--cysteine ligase (525 aa).

This sequence belongs to the glutamate--cysteine ligase type 1 family. Type 1 subfamily.

It catalyses the reaction L-cysteine + L-glutamate + ATP = gamma-L-glutamyl-L-cysteine + ADP + phosphate + H(+). The protein operates within sulfur metabolism; glutathione biosynthesis; glutathione from L-cysteine and L-glutamate: step 1/2. This is Glutamate--cysteine ligase from Pseudomonas putida (strain ATCC 47054 / DSM 6125 / CFBP 8728 / NCIMB 11950 / KT2440).